The chain runs to 78 residues: Large ribosomal subunit protein bL28 (78 aa).

Positions 1 to 22 (MSRVCQVTGKRPMSGNNRSHAM) are disordered.

It belongs to the bacterial ribosomal protein bL28 family.

The chain is Large ribosomal subunit protein bL28 from Yersinia pseudotuberculosis serotype O:1b (strain IP 31758).